A 590-amino-acid polypeptide reads, in one-letter code: Aspartate--tRNA(Asp/Asn) ligase (590 aa).

L-aspartate is bound at residue glutamate 172. The tract at residues 196–199 (QLFK) is aspartate. Position 218 (arginine 218) interacts with L-aspartate. ATP is bound by residues 218-220 (RDE) and glutamine 227. Residue histidine 449 participates in L-aspartate binding. Glutamate 484 contacts ATP. Arginine 491 provides a ligand contact to L-aspartate. ATP is bound at residue 536-539 (GIDR).

The protein belongs to the class-II aminoacyl-tRNA synthetase family. Type 1 subfamily. Homodimer.

The protein localises to the cytoplasm. It carries out the reaction tRNA(Asx) + L-aspartate + ATP = L-aspartyl-tRNA(Asx) + AMP + diphosphate. Its function is as follows. Aspartyl-tRNA synthetase with relaxed tRNA specificity since it is able to aspartylate not only its cognate tRNA(Asp) but also tRNA(Asn). Reaction proceeds in two steps: L-aspartate is first activated by ATP to form Asp-AMP and then transferred to the acceptor end of tRNA(Asp/Asn). The protein is Aspartate--tRNA(Asp/Asn) ligase of Francisella tularensis subsp. tularensis (strain SCHU S4 / Schu 4).